The following is a 622-amino-acid chain: Wall-associated receptor kinase-like 21 (622 aa).

A signal peptide spans 1–21; that stretch reads MAETPQPYLIFVFFVFTLTVA. Topologically, residues 22–247 are extracellular; it reads TQTTGSVKCK…LVYKRKGLHK (226 aa). 5 N-linked (GlcNAc...) asparagine glycosylation sites follow: Asn50, Asn114, Asn131, Asn160, and Asn195. Residues 248-268 traverse the membrane as a helical segment; that stretch reads LVVLGTAGILVGVLVIVVLIA. Residues 269-622 lie on the Cytoplasmic side of the membrane; sequence TYFFRNKQSA…MKRQQSFPRE (354 aa). In terms of domain architecture, Protein kinase spans 314–594; that stretch reads FSDKNMLGTG…EITEDLHRIK (281 aa). Residues 320–328 and Lys342 each bind ATP; that span reads LGTGAYGTV. Asp439 functions as the Proton acceptor in the catalytic mechanism.

This sequence belongs to the protein kinase superfamily. Ser/Thr protein kinase family.

The protein resides in the membrane. It carries out the reaction L-seryl-[protein] + ATP = O-phospho-L-seryl-[protein] + ADP + H(+). The catalysed reaction is L-threonyl-[protein] + ATP = O-phospho-L-threonyl-[protein] + ADP + H(+). In terms of biological role, serine/threonine-protein kinase that may function as a signaling receptor of extracellular matrix component. This chain is Wall-associated receptor kinase-like 21 (WAKL21), found in Arabidopsis thaliana (Mouse-ear cress).